The following is a 158-amino-acid chain: 3-hydroxyacyl-[acyl-carrier-protein] dehydratase FabZ (158 aa).

Residue His-61 is part of the active site.

Belongs to the thioester dehydratase family. FabZ subfamily.

It localises to the cytoplasm. The enzyme catalyses a (3R)-hydroxyacyl-[ACP] = a (2E)-enoyl-[ACP] + H2O. Functionally, involved in unsaturated fatty acids biosynthesis. Catalyzes the dehydration of short chain beta-hydroxyacyl-ACPs and long chain saturated and unsaturated beta-hydroxyacyl-ACPs. This Methylobacterium radiotolerans (strain ATCC 27329 / DSM 1819 / JCM 2831 / NBRC 15690 / NCIMB 10815 / 0-1) protein is 3-hydroxyacyl-[acyl-carrier-protein] dehydratase FabZ.